Here is a 239-residue protein sequence, read N- to C-terminus: UPF0173 metal-dependent hydrolase Msm_0779 (239 aa).

It belongs to the UPF0173 family.

The polypeptide is UPF0173 metal-dependent hydrolase Msm_0779 (Methanobrevibacter smithii (strain ATCC 35061 / DSM 861 / OCM 144 / PS)).